We begin with the raw amino-acid sequence, 157 residues long: Endoribonuclease YbeY (157 aa).

H123, H127, and H133 together coordinate Zn(2+).

It belongs to the endoribonuclease YbeY family. Requires Zn(2+) as cofactor.

It localises to the cytoplasm. Functionally, single strand-specific metallo-endoribonuclease involved in late-stage 70S ribosome quality control and in maturation of the 3' terminus of the 16S rRNA. This chain is Endoribonuclease YbeY, found in Limosilactobacillus fermentum (strain NBRC 3956 / LMG 18251) (Lactobacillus fermentum).